A 465-amino-acid chain; its full sequence is Zinc finger and BTB domain-containing protein 32 (465 aa).

The region spanning 29 to 87 is the BTB domain; it reads CDTLITVGGLEFPAHSLVLAGASPRLGCRGRWALVEDISPSTFAQILTFVYGESIELQP. Disordered stretches follow at residues 111–179 and 285–310; these read RAQK…EMAG and QNQL…PWQI. 2 stretches are compositionally biased toward basic and acidic residues: residues 123–139 and 147–176; these read PGLK…RGSE and EKQK…ERPE. 3 C2H2-type zinc fingers span residues 350 to 372, 378 to 400, and 405 to 427; these read YSCS…YRVH, FSCS…LRTH, and YRCP…MRGH.

This sequence belongs to the krueppel C2H2-type zinc-finger protein family. As to quaternary structure, homodimer (via PTB domain). Interacts with the N-terminal of FANCC. Interacts with ZBTB16. Interacts with GATA3. As to expression, isoform 1 is testis-specific and is not expressed in lymphoid organs such as thymus or spleen. Isoform 2 is expressed in both B- and T-lymphoid cells.

The protein resides in the nucleus. Its function is as follows. DNA-binding protein that binds to the to a 5'-TGTACAGTGT-3' core sequence. May function as a transcriptional transactivator and transcriptional repressor. Probably exerts its repressor effect by preventing GATA3 from binding to DNA. May play a role in regulating the differentiation and activation of helper T-cells. This is Zinc finger and BTB domain-containing protein 32 (Zbtb32) from Mus musculus (Mouse).